The primary structure comprises 701 residues: Elongation factor G (701 aa).

The 283-residue stretch at 8–290 folds into the tr-type G domain; the sequence is SLYRNIGISA…AVVELLPAPT (283 aa). GTP contacts are provided by residues 17 to 24, 88 to 92, and 142 to 145; these read AHIDAGKT, DTPGH, and NKMD.

It belongs to the TRAFAC class translation factor GTPase superfamily. Classic translation factor GTPase family. EF-G/EF-2 subfamily.

The protein localises to the cytoplasm. Its function is as follows. Catalyzes the GTP-dependent ribosomal translocation step during translation elongation. During this step, the ribosome changes from the pre-translocational (PRE) to the post-translocational (POST) state as the newly formed A-site-bound peptidyl-tRNA and P-site-bound deacylated tRNA move to the P and E sites, respectively. Catalyzes the coordinated movement of the two tRNA molecules, the mRNA and conformational changes in the ribosome. The polypeptide is Elongation factor G (Neisseria meningitidis serogroup B (strain ATCC BAA-335 / MC58)).